Here is a 100-residue protein sequence, read N- to C-terminus: Trp operon repressor homolog (100 aa).

The DNA-binding element occupies 59–82; sequence QRQISQMLGVGIATITRGSNELKS. The span at 78-93 shows a compositional bias: basic and acidic residues; it reads NELKSKSDTDKDKLKT. The tract at residues 78–100 is disordered; the sequence is NELKSKSDTDKDKLKTLLEQGAQ.

The protein belongs to the TrpR family. Homodimer.

It is found in the cytoplasm. In terms of biological role, this protein is an aporepressor. When complexed with L-tryptophan it binds the operator region of the trp operon and prevents the initiation of transcription. The chain is Trp operon repressor homolog from Vibrio campbellii (strain ATCC BAA-1116).